A 616-amino-acid chain; its full sequence is METVDTSQRLARLRELMKERNVDVYLVPSEDSHQSEYIAPCDGRREFISGFSGSAGCAIVSMTKAALSTDGRYFNQASKQLDNNWLLLKRGIESMPTWQEWTAEQLEGGKVVGVDPSLITASDARSLSETIKRSGGSLLGVQENLVDLVWGKDRPCRPSEKVTVHPVEFAGKSFEEKITDLRKELEKKKSAGFVVSMLDEVAWLFNLRGNDIPYNPVFFSYAIITPSTADLYIDEEKLSADVKKHLGDKVSLKPYTSIFEDAKALGQSAQAEVNGGASDPPRKFFISTKASWSLSLALGGANKVEEVRSPISDAKAIKNDTELEGMRACHIRDGAALTKYFAWLENELVNKKTVLNEVEASDKLEEIRSKQKNFVGLSFDTISSSGPNAAVVHYKAERNNCSIIDPEAVYLCDSGAQYLDGTTDTTRTLHFGEPTEKERKAYTLVLKGMIAIDTAIFPKGTTGFSLDTLARQFLWKEGLDYLHGTGHGVGSYLNVHEGPIGIGTRVQYSETPLSVGNVISDEPGYYEDGKFGIRIENIIMAREVKTTFSFGERPWLGFEHVTMTPLCRKLTDPSLLNDAEKKWINEYHSEVWEKTSGYFAEDELTRNWLKRETQPI.

4 residues coordinate Mn(2+): Asp413, Asp424, Glu522, and Glu536.

The protein belongs to the peptidase M24B family. It depends on Mn(2+) as a cofactor.

The enzyme catalyses Release of any N-terminal amino acid, including proline, that is linked to proline, even from a dipeptide or tripeptide.. Functionally, catalyzes the removal of a penultimate prolyl residue from the N-termini of peptides. This Paracoccidioides brasiliensis (strain Pb18) protein is Probable Xaa-Pro aminopeptidase P (AMPP).